Here is a 164-residue protein sequence, read N- to C-terminus: Lipoprotein signal peptidase (164 aa).

A run of 4 helical transmembrane segments spans residues 12–32 (WLWL…LILQ), 42–62 (LFPS…SFLA), 70–90 (WFFA…MYRS), and 102–122 (ALII…GFVV). Residues D123 and D141 contribute to the active site. A helical membrane pass occupies residues 137 to 157 (FNLADTAICVGAALIVLEGFL).

Belongs to the peptidase A8 family.

The protein localises to the cell inner membrane. The enzyme catalyses Release of signal peptides from bacterial membrane prolipoproteins. Hydrolyzes -Xaa-Yaa-Zaa-|-(S,diacylglyceryl)Cys-, in which Xaa is hydrophobic (preferably Leu), and Yaa (Ala or Ser) and Zaa (Gly or Ala) have small, neutral side chains.. Its pathway is protein modification; lipoprotein biosynthesis (signal peptide cleavage). Its function is as follows. This protein specifically catalyzes the removal of signal peptides from prolipoproteins. This chain is Lipoprotein signal peptidase, found in Shigella flexneri serotype 5b (strain 8401).